The primary structure comprises 274 residues: Lipoprotein E (274 aa).

A signal peptide spans 1–20 (MKTTLKMTALAALSAFVLAG). Cysteine 21 carries N-palmitoyl cysteine lipidation. Cysteine 21 is lipidated: S-diacylglycerol cysteine.

It localises to the cell outer membrane. The chain is Lipoprotein E (hel) from Haemophilus influenzae (strain ATCC 51907 / DSM 11121 / KW20 / Rd).